The sequence spans 138 residues: Photosystem II extrinsic protein U (138 aa).

The signal sequence occupies residues 1 to 28; that stretch reads MSRVVSALMGLVLMFGCAFFSVQPQAQA. The propeptide occupies 29-42; that stretch reads LDLSNGFVSAAVLG.

The protein belongs to the PsbU family. PSII is composed of 1 copy each of membrane proteins PsbA, PsbB, PsbC, PsbD, PsbE, PsbF, PsbH, PsbI, PsbJ, PsbK, PsbL, PsbM, PsbT, PsbX, PsbY, PsbZ, Psb30/Ycf12, peripheral proteins PsbO, CyanoQ (PsbQ), PsbU, PsbV and a large number of cofactors. It forms dimeric complexes.

The protein localises to the cellular thylakoid membrane. Functionally, one of the extrinsic, lumenal subunits of photosystem II (PSII). PSII is a light-driven water plastoquinone oxidoreductase, using light energy to abstract electrons from H(2)O, generating a proton gradient subsequently used for ATP formation. The extrinsic proteins stabilize the structure of photosystem II oxygen-evolving complex (OEC), the ion environment of oxygen evolution and protect the OEC against heat-induced inactivation. The chain is Photosystem II extrinsic protein U from Picosynechococcus sp. (strain ATCC 27264 / PCC 7002 / PR-6) (Agmenellum quadruplicatum).